The following is a 347-amino-acid chain: Histidinol-phosphate aminotransferase (347 aa).

K209 bears the N6-(pyridoxal phosphate)lysine mark.

Belongs to the class-II pyridoxal-phosphate-dependent aminotransferase family. Histidinol-phosphate aminotransferase subfamily. As to quaternary structure, homodimer. Pyridoxal 5'-phosphate serves as cofactor.

It catalyses the reaction L-histidinol phosphate + 2-oxoglutarate = 3-(imidazol-4-yl)-2-oxopropyl phosphate + L-glutamate. It participates in amino-acid biosynthesis; L-histidine biosynthesis; L-histidine from 5-phospho-alpha-D-ribose 1-diphosphate: step 7/9. This chain is Histidinol-phosphate aminotransferase, found in Geotalea uraniireducens (strain Rf4) (Geobacter uraniireducens).